The sequence spans 429 residues: Adenylosuccinate synthetase (429 aa).

Residues 12–18 (GDEGKGK) and 40–42 (GHT) each bind GTP. The Proton acceptor role is filled by Asp-13. Mg(2+)-binding residues include Asp-13 and Gly-40. Residues 13–16 (DEGK), 38–41 (NAGH), Thr-129, Arg-143, Gln-223, Thr-238, and Arg-302 each bind IMP. His-41 serves as the catalytic Proton donor. 298-304 (VVTGRKR) is a binding site for substrate. Residues Arg-304, 330–332 (KLD), and 412–414 (STS) each bind GTP.

It belongs to the adenylosuccinate synthetase family. Homodimer. It depends on Mg(2+) as a cofactor.

The protein resides in the cytoplasm. The enzyme catalyses IMP + L-aspartate + GTP = N(6)-(1,2-dicarboxyethyl)-AMP + GDP + phosphate + 2 H(+). The protein operates within purine metabolism; AMP biosynthesis via de novo pathway; AMP from IMP: step 1/2. In terms of biological role, plays an important role in the de novo pathway of purine nucleotide biosynthesis. Catalyzes the first committed step in the biosynthesis of AMP from IMP. In Brucella suis (strain ATCC 23445 / NCTC 10510), this protein is Adenylosuccinate synthetase.